A 421-amino-acid polypeptide reads, in one-letter code: Gamma-glutamyl phosphate reductase (421 aa).

Belongs to the gamma-glutamyl phosphate reductase family.

The protein resides in the cytoplasm. It carries out the reaction L-glutamate 5-semialdehyde + phosphate + NADP(+) = L-glutamyl 5-phosphate + NADPH + H(+). Its pathway is amino-acid biosynthesis; L-proline biosynthesis; L-glutamate 5-semialdehyde from L-glutamate: step 2/2. Its function is as follows. Catalyzes the NADPH-dependent reduction of L-glutamate 5-phosphate into L-glutamate 5-semialdehyde and phosphate. The product spontaneously undergoes cyclization to form 1-pyrroline-5-carboxylate. In Nitrosospira multiformis (strain ATCC 25196 / NCIMB 11849 / C 71), this protein is Gamma-glutamyl phosphate reductase.